The chain runs to 414 residues: Hydroxysqualene dehydroxylase (414 aa).

The protein belongs to the HpnE family.

It carries out the reaction squalene + FAD + H2O + H(+) = hydroxysqualene + FADH2. It participates in secondary metabolite biosynthesis; hopanoid biosynthesis. Functionally, involved in the biosynthesis of the hopanoid precursor squalene (SQ) from farnesyl diphosphate (FPP). Catalyzes the third (last) step, the reduction of hydroxysqualene (HSQ) to SQ. This Zymomonas mobilis subsp. mobilis (strain ATCC 31821 / ZM4 / CP4) protein is Hydroxysqualene dehydroxylase.